The sequence spans 249 residues: 2,3-bisphosphoglycerate-dependent phosphoglycerate mutase (249 aa).

Residues 8–15 (RHGESTWN), 21–22 (TG), Arg60, 87–90 (ERHY), Lys98, 114–115 (RR), and 183–184 (GN) each bind substrate. Residue His9 is the Tele-phosphohistidine intermediate of the active site. Glu87 acts as the Proton donor/acceptor in catalysis.

The protein belongs to the phosphoglycerate mutase family. BPG-dependent PGAM subfamily. In terms of assembly, homodimer.

It catalyses the reaction (2R)-2-phosphoglycerate = (2R)-3-phosphoglycerate. Its pathway is carbohydrate degradation; glycolysis; pyruvate from D-glyceraldehyde 3-phosphate: step 3/5. Functionally, catalyzes the interconversion of 2-phosphoglycerate and 3-phosphoglycerate. The polypeptide is 2,3-bisphosphoglycerate-dependent phosphoglycerate mutase (Burkholderia mallei (strain NCTC 10247)).